The following is a 284-amino-acid chain: Nucleotide-binding protein Shal_3708 (284 aa).

8–15 (GRSGSGKS) contacts ATP. Position 56-59 (56-59 (DIRN)) interacts with GTP.

Belongs to the RapZ-like family.

Displays ATPase and GTPase activities. The sequence is that of Nucleotide-binding protein Shal_3708 from Shewanella halifaxensis (strain HAW-EB4).